The sequence spans 191 residues: Fe/S biogenesis protein NfuA (191 aa).

[4Fe-4S] cluster is bound by residues Cys-149 and Cys-152.

It belongs to the NfuA family. Homodimer. [4Fe-4S] cluster serves as cofactor.

Functionally, involved in iron-sulfur cluster biogenesis. Binds a 4Fe-4S cluster, can transfer this cluster to apoproteins, and thereby intervenes in the maturation of Fe/S proteins. Could also act as a scaffold/chaperone for damaged Fe/S proteins. The sequence is that of Fe/S biogenesis protein NfuA from Sodalis glossinidius (strain morsitans).